We begin with the raw amino-acid sequence, 507 residues long: MVTIRADEISSIIRERIEQYTREVKVVNTGTVLQVGDGIARVHGLDKVMAGELVEFEEGTVGIALNLESNNVGVVLMGDGLLIQEGSSVKATGKIAQIPVSDGYLGRVLNALAKPIDGRGEISASESRLIESPAPGIIARRSVYEPLQTGIIAIDAMIPIGRGQRELIIGDRQTGKTAVATDTILNQKGQNVICVYVAIGQKASSVAQVVTALQERGAMDYTIVVAETADSPATLQYLAPYTGAALAEYFMYRKQHTLIIYDDLSKQAQAYRQMSLLLRRPPGREAYPGDVFYLHSRLLERAAKLSNELGEGSMTALPIVETQSGDVSAYIPTNVISITDGQIFLSADLFNAGIRPAINVGISVSRVGSAAQIKAMKQVAGKLKLELAQFAELEAFAQFASDLDKATQNQLARGQRLRELLKQSQSAPLGVDEQIATIFTGANGYLDSLEVGQVRKFLVQLRTYLKKNKPQFQEIISSTKTFTPEAEALLKEAIQEHIELFLQQEQA.

170–177 (GDRQTGKT) is an ATP binding site.

This sequence belongs to the ATPase alpha/beta chains family. As to quaternary structure, F-type ATPases have 2 components, CF(1) - the catalytic core - and CF(0) - the membrane proton channel. CF(1) has five subunits: alpha(3), beta(3), gamma(1), delta(1), epsilon(1). CF(0) has four main subunits: a, b, b' and c.

Its subcellular location is the plastid. The protein resides in the chloroplast thylakoid membrane. The enzyme catalyses ATP + H2O + 4 H(+)(in) = ADP + phosphate + 5 H(+)(out). Produces ATP from ADP in the presence of a proton gradient across the membrane. The alpha chain is a regulatory subunit. This Lemna minor (Common duckweed) protein is ATP synthase subunit alpha, chloroplastic.